The following is a 104-amino-acid chain: DNA-binding transcriptional repressor TubR (104 aa).

DNA-binding regions (HTH) lie at residues 43–50 (KTAVAEMI) and 54–65 (KPTVFATVNSFY).

In terms of assembly, homodimer. Binds to tubC DNA, the TubR-DNA complex binds to TubZ.

In terms of biological role, a DNA-binding protein that is part of the type III plasmid partition system used to ensure correct segregation of the pBtoxis plasmid. Cooperatively binds to the centromere-like site (tubC), which may seed filament formation by the TubZ polymerizing GTPase, stabilizing TubZ filaments. TubR-tubC complexes track the depolymerizing minus end of the filament, probably pulling plasmid within the cell. Required for plasmid replication. Negatively regulates levels of TubZ; its effect on RNA expression has not been shown. Specifically binds iterons, 12-bp imperfect direct repeats that function as a plasmid origin of replication. Four TubR dimers bind to tubC, forming an extended bent DNA-protein filament with protein wrapping helically around the outside of the DNA. The protein is DNA-binding transcriptional repressor TubR of Bacillus thuringiensis subsp. israelensis.